The sequence spans 268 residues: Putative carbamate hydrolase RutD (268 aa).

The region spanning 24–243 is the AB hydrolase-1 domain; it reads VILSAGLGGS…NATLDIAPWG (220 aa).

The protein belongs to the AB hydrolase superfamily. Hydrolase RutD family.

It catalyses the reaction carbamate + 2 H(+) = NH4(+) + CO2. Functionally, involved in pyrimidine catabolism. May facilitate the hydrolysis of carbamate, a reaction that can also occur spontaneously. In Caulobacter sp. (strain K31), this protein is Putative carbamate hydrolase RutD.